A 727-amino-acid polypeptide reads, in one-letter code: ADP-ribosylation factor-binding protein GGA3 (727 aa).

The 131-residue stretch at 16–146 (ATNPSNRQED…MLKRQGIVQS (131 aa)) folds into the VHS domain. Phosphoserine is present on residues Ser-159 and Ser-275. The GAT domain maps to 171 to 298 (DEEKSKLLAK…VINSYKTIIE (128 aa)). The unstructured hinge stretch occupies residues 299–597 (GQIINGEVTT…VHVPLESIKP (299 aa)). The tract at residues 334 to 385 (TPSSSSPVLAPAPAPPTSGIPILPPPPQTSGPPRSRSSSQAEAPSGPDSTNN) is disordered. Over residues 343-363 (APAPAPPTSGIPILPPPPQTS) the composition is skewed to pro residues. Residues 364–374 (GPPRSRSSSQA) are compositionally biased toward low complexity. The DXXLL motif lies at 391–395 (DEELL). Residues 400 to 419 (SDPAPTAPKESAGNSPWHLF) form a disordered region. Residues 598–719 (SSALPVTAYD…TELGEVDQFP (122 aa)) form the GAE domain.

This sequence belongs to the GGA protein family. As to quaternary structure, monomer. Interacts with GGA1 and GGA2. Binds to clathrin and activated ARFs, such as ARF1, ARF5 and ARF6. Binds RABEP1 and RABGEF1. Interacts with the membrane proteins M6PR/CD-MPR and IGF2R/CI-MPR and the accessory proteins SYNRG, EPN4, NECAP1, NECAP2 and AFTPH/aftiphilin. Interacts with TSG101 and UBC. Interacts with ADRA2B. Interacts with NTRK1; the interaction is independent of NTRK1 activation and ubiquitination. Interacts (via VHS domain) with BACE1 (via DXXLL motif). In terms of processing, phosphorylated by CK2 and dephosphorylated by PP2A. Phosphorylation of GGA3 allows the internal DXXLL motif to bind the VHS domain and to inhibit the recognition of cargo signals. Post-translationally, ubiquitinated. Proteolytically cleaved during apoptosis by CASP3.

It is found in the golgi apparatus. The protein resides in the trans-Golgi network membrane. The protein localises to the endosome membrane. It localises to the early endosome membrane. Its subcellular location is the recycling endosome membrane. Functionally, plays a role in protein sorting and trafficking between the trans-Golgi network (TGN) and endosomes. Mediates the ARF-dependent recruitment of clathrin to the TGN and binds ubiquitinated proteins and membrane cargo molecules with a cytosolic acidic cluster-dileucine (DXXLL) motif. Mediates export of the GPCR receptor ADRA2B to the cell surface. Involved in BACE1 transport and sorting as well as regulation of BACE1 protein levels. Regulates retrograde transport of BACE1 from endosomes to the trans-Golgi network via interaction through the VHS motif and dependent of BACE1 phosphorylation. Modulates BACE1 protein levels independently of the interaction between VHS domain and DXXLL motif through recognition of ubiquitination. Key player in a novel DXXLL-mediated endosomal sorting machinery to the recycling pathway that targets NTRK1 to the plasma membrane. The chain is ADP-ribosylation factor-binding protein GGA3 from Rattus norvegicus (Rat).